The chain runs to 443 residues: Methyl-coenzyme M reductase II subunit beta (443 aa).

A coenzyme M-binding site is contributed by Tyr-367. Gly-369 lines the coenzyme B pocket.

It belongs to the methyl-coenzyme M reductase beta subunit family. In terms of assembly, MCR is a hexamer of two alpha, two beta, and two gamma chains, forming a dimer of heterotrimers. Requires coenzyme F430 as cofactor.

The catalysed reaction is coenzyme B + methyl-coenzyme M = methane + coenzyme M-coenzyme B heterodisulfide. The protein operates within one-carbon metabolism; methyl-coenzyme M reduction; methane from methyl-coenzyme M: step 1/1. Functionally, component of the methyl-coenzyme M reductase (MCR) I that catalyzes the reductive cleavage of methyl-coenzyme M (CoM-S-CH3 or 2-(methylthio)ethanesulfonate) using coenzyme B (CoB or 7-mercaptoheptanoylthreonine phosphate) as reductant which results in the production of methane and the mixed heterodisulfide of CoB and CoM (CoM-S-S-CoB). This is the final step in methanogenesis. The sequence is that of Methyl-coenzyme M reductase II subunit beta (mrtB) from Methanothermus fervidus (strain ATCC 43054 / DSM 2088 / JCM 10308 / V24 S).